The sequence spans 77 residues: Probable Fe(2+)-trafficking protein (77 aa).

Belongs to the Fe(2+)-trafficking protein family. As to quaternary structure, monomer.

Its function is as follows. Could be a mediator in iron transactions between iron acquisition and iron-requiring processes, such as synthesis and/or repair of Fe-S clusters in biosynthetic enzymes. This chain is Probable Fe(2+)-trafficking protein, found in Buchnera aphidicola subsp. Acyrthosiphon pisum (strain APS) (Acyrthosiphon pisum symbiotic bacterium).